The chain runs to 964 residues: Vitamin B12-dependent ribonucleotide reductase (964 aa).

A disordered region spans residues 1–21; the sequence is MTETASGPARGSRAKGTKAKG. Basic residues predominate over residues 12 to 21; it reads SRAKGTKAKG. Substrate-binding positions include S142, 158-159, G187, 363-367, and 553-557; these read AC, NPCSE, and PTGTI. C159 and C376 form a disulfide bridge. The active-site Proton acceptor is the N363. Residue C365 is the Cysteine radical intermediate of the active site. The Proton acceptor role is filled by E367.

Belongs to the ribonucleoside diphosphate reductase class-2 family. The cofactor is adenosylcob(III)alamin.

The catalysed reaction is a 2'-deoxyribonucleoside 5'-diphosphate + [thioredoxin]-disulfide + H2O = a ribonucleoside 5'-diphosphate + [thioredoxin]-dithiol. Its function is as follows. Catalyzes the reduction of ribonucleotides to deoxyribonucleotides. May function to provide a pool of deoxyribonucleotide precursors for DNA repair during oxygen limitation and/or for immediate growth after restoration of oxygen. This is Vitamin B12-dependent ribonucleotide reductase (nrdJ) from Streptomyces avermitilis (strain ATCC 31267 / DSM 46492 / JCM 5070 / NBRC 14893 / NCIMB 12804 / NRRL 8165 / MA-4680).